We begin with the raw amino-acid sequence, 143 residues long: uncharacterized protein (143 aa).

The disordered stretch occupies residues 111–143; it reads VTQDISHTSGKSPTPKAKSSSPKKSKKKNWIPL. Over residues 119–130 the composition is skewed to low complexity; sequence SGKSPTPKAKSS. Basic residues predominate over residues 131–143; it reads SPKKSKKKNWIPL.

It belongs to the chlamydial CPn_0742/CT_635/TC_0003 family.

This is an uncharacterized protein from Chlamydia muridarum (strain MoPn / Nigg).